Consider the following 195-residue polypeptide: Probable GTP-binding protein EngB (195 aa).

The 172-residue stretch at 24-195 (ELPEIALAGR…EAWDAILEKL (172 aa)) folds into the EngB-type G domain. GTP is bound by residues 32–39 (GRSNVGKS), 59–63 (GKTQL), 77–80 (DVPG), 144–147 (TKAD), and 176–178 (FSS). Mg(2+)-binding residues include Ser39 and Thr61.

The protein belongs to the TRAFAC class TrmE-Era-EngA-EngB-Septin-like GTPase superfamily. EngB GTPase family. Requires Mg(2+) as cofactor.

Functionally, necessary for normal cell division and for the maintenance of normal septation. The chain is Probable GTP-binding protein EngB from Streptococcus pneumoniae (strain P1031).